The primary structure comprises 50 residues: Large ribosomal subunit protein bL32c (50 aa).

The protein belongs to the bacterial ribosomal protein bL32 family.

Its subcellular location is the plastid. The protein resides in the chloroplast. This is Large ribosomal subunit protein bL32c from Lotus japonicus (Lotus corniculatus var. japonicus).